A 430-amino-acid chain; its full sequence is tRNA(Ile)-lysidine synthase (430 aa).

24–29 contributes to the ATP binding site; it reads SGGLDS.

The protein belongs to the tRNA(Ile)-lysidine synthase family.

It localises to the cytoplasm. The enzyme catalyses cytidine(34) in tRNA(Ile2) + L-lysine + ATP = lysidine(34) in tRNA(Ile2) + AMP + diphosphate + H(+). In terms of biological role, ligates lysine onto the cytidine present at position 34 of the AUA codon-specific tRNA(Ile) that contains the anticodon CAU, in an ATP-dependent manner. Cytidine is converted to lysidine, thus changing the amino acid specificity of the tRNA from methionine to isoleucine. The sequence is that of tRNA(Ile)-lysidine synthase from Haemophilus influenzae (strain PittEE).